Here is a 289-residue protein sequence, read N- to C-terminus: Bis(5'-nucleosyl)-tetraphosphatase, symmetrical (289 aa).

Belongs to the Ap4A hydrolase family.

The enzyme catalyses P(1),P(4)-bis(5'-adenosyl) tetraphosphate + H2O = 2 ADP + 2 H(+). Hydrolyzes diadenosine 5',5'''-P1,P4-tetraphosphate to yield ADP. The chain is Bis(5'-nucleosyl)-tetraphosphatase, symmetrical from Yersinia pseudotuberculosis serotype O:1b (strain IP 31758).